The primary structure comprises 678 residues: MTQASKQQRDILVTSALPYANGPIHLGHLLEYIQTDIWVRFQNMRGHNCYYVCADDAHGTAIMLRAEREGITPEQLIDRIRQEHQEDFAGFHIRFDNYYSTHSEENQYFSEYIYRQLKDNDHIATRKITQFFDPEKEMFLADRFIKGTCPKCKTEDQYGDNCEACGATYTPAELINPRSAVSGATPVEKESEHYFFKLPEFHDFLSKWTRSGALQPQVANKLAEWLDAGLQEWDISRDAPYFGFEIPDAPGKYFYVWLDAPIGYLASFKNLCNREGIDFEHFWKKDSSAEVYHFIGKDIINFHALFWPSMLHDAGFRTPTAVWAHGFVTVNGKKMSKSRGTFIMARTYLDHLDPEYLRYYFAAKLTGGVDDMDLNLDDFAARVNSDLVGKVVNIASRSAGFITKRFDGKLGKVTEQDKLKEFIDAGEQIAEFYEAREFGRAMRRIMELADIANQYVNDEQPWVIAKQEGQDDKLQAICTNALNMFRLLMTYLAPVLPKTADAAQSFLNSRLDWNNRAALLENHGIDKFKPLMNRVDMAQIEKMLDASKEEMPAAVGQPSAAPTADLEPVAEEIEFPDFAKVDLRVAKIVKAEHVEGADKLLRLTLDIGHGERNVFAGIKSAYKPEDLEGRMTVMVANLKPRKMKFGMSEGMVLAAGPGGKEIFILSPDSGATPGMRVM.

Positions 18-28 (PYANGPIHLGH) match the 'HIGH' region motif. The Zn(2+) site is built by Cys149, Cys152, Cys162, and Cys165. The short motif at 334-338 (KMSKS) is the 'KMSKS' region element. Lys337 provides a ligand contact to ATP. The tRNA-binding domain occupies 577 to 678 (DFAKVDLRVA…SGATPGMRVM (102 aa)).

The protein belongs to the class-I aminoacyl-tRNA synthetase family. MetG type 1 subfamily. Homodimer. Requires Zn(2+) as cofactor.

It localises to the cytoplasm. The catalysed reaction is tRNA(Met) + L-methionine + ATP = L-methionyl-tRNA(Met) + AMP + diphosphate. Is required not only for elongation of protein synthesis but also for the initiation of all mRNA translation through initiator tRNA(fMet) aminoacylation. This Marinobacter nauticus (strain ATCC 700491 / DSM 11845 / VT8) (Marinobacter aquaeolei) protein is Methionine--tRNA ligase.